Here is a 201-residue protein sequence, read N- to C-terminus: Recombination protein RecR (201 aa).

The C4-type zinc-finger motif lies at Cys60–Cys75. The region spanning Ala83–Pro178 is the Toprim domain.

The protein belongs to the RecR family.

May play a role in DNA repair. It seems to be involved in an RecBC-independent recombinational process of DNA repair. It may act with RecF and RecO. The polypeptide is Recombination protein RecR (Brucella melitensis biotype 2 (strain ATCC 23457)).